A 354-amino-acid chain; its full sequence is Uroporphyrinogen decarboxylase (354 aa).

Residues 27-31 (RQAGR), Asp-77, Tyr-154, Thr-209, and His-327 each bind substrate.

The protein belongs to the uroporphyrinogen decarboxylase family. In terms of assembly, homodimer.

It localises to the cytoplasm. The enzyme catalyses uroporphyrinogen III + 4 H(+) = coproporphyrinogen III + 4 CO2. It participates in porphyrin-containing compound metabolism; protoporphyrin-IX biosynthesis; coproporphyrinogen-III from 5-aminolevulinate: step 4/4. In terms of biological role, catalyzes the decarboxylation of four acetate groups of uroporphyrinogen-III to yield coproporphyrinogen-III. The protein is Uroporphyrinogen decarboxylase of Salmonella agona (strain SL483).